Reading from the N-terminus, the 421-residue chain is Transcription factor rglT (421 aa).

A disordered region spans residues 1 to 29; sequence MQYEAYQWGQSHPTSTSGSMLQDTPTAAS. Residues 8-29 show a composition bias toward polar residues; it reads WGQSHPTSTSGSMLQDTPTAAS. A DNA-binding region (zn(2)-C6 fungal-type) is located at residues 38 to 65; that stretch reads CDECRKRKLKCSGEISGCSRCIKQSLSC. A compositionally biased stretch (basic and acidic residues) spans 346–357; that stretch reads EARQRRWHESPD. The segment at 346-371 is disordered; sequence EARQRRWHESPDSHPLPPDQRLNIPS.

The protein resides in the nucleus. In terms of biological role, transcription factor that is important for oxidative stress resistance and essential for gliotoxin (GT) self-protection through the regulation of a gene encoding a putative gliT homolog, even if E.nidulans does not produce gliotoxin itself. The protein is Transcription factor rglT of Emericella nidulans (strain FGSC A4 / ATCC 38163 / CBS 112.46 / NRRL 194 / M139) (Aspergillus nidulans).